A 159-amino-acid chain; its full sequence is Large ribosomal subunit protein uL10 (159 aa).

The protein belongs to the universal ribosomal protein uL10 family. As to quaternary structure, part of the ribosomal stalk of the 50S ribosomal subunit. The N-terminus interacts with L11 and the large rRNA to form the base of the stalk. The C-terminus forms an elongated spine to which L12 dimers bind in a sequential fashion forming a multimeric L10(L12)X complex.

Forms part of the ribosomal stalk, playing a central role in the interaction of the ribosome with GTP-bound translation factors. This Campylobacter lari (strain RM2100 / D67 / ATCC BAA-1060) protein is Large ribosomal subunit protein uL10.